The following is a 393-amino-acid chain: Interferon regulatory factor 9 (393 aa).

The segment at residues 9–116 is a DNA-binding region (IRF tryptophan pentad repeat); it reads TRKLRNWVVE…EPYKVYQLLP (108 aa). Disordered stretches follow at residues 120–151 and 163–202; these read VSGQ…AMQN and LNNE…APFQ. At Ser139 the chain carries Phosphoserine.

The protein belongs to the IRF family. Interacts with STAT2 in the cytoplasm. Forms the interferon-stimulated gene factor 3 complex (ISGF3) with the heterodimer STAT1:STAT2; upon stimulation. In terms of assembly, (Microbial infection) Interacts with measles virus V protein; this interaction prevents the binding of IRF9 to STAT2 and thereby the type I interferon signaling pathway. (Microbial infection) Ubiquitinated by Herpes simplex virus 2 E3 ubiquitin ligase ICP22.

The protein resides in the cytoplasm. The protein localises to the nucleus. Functionally, transcription factor that plays an essential role in anti-viral immunity. It mediates signaling by type I IFNs (IFN-alpha and IFN-beta). Following type I IFN binding to cell surface receptors, Jak kinases (TYK2 and JAK1) are activated, leading to tyrosine phosphorylation of STAT1 and STAT2. IRF9/ISGF3G associates with the phosphorylated STAT1:STAT2 dimer to form a complex termed ISGF3 transcription factor, that enters the nucleus. ISGF3 binds to the IFN stimulated response element (ISRE) to activate the transcription of interferon stimulated genes, which drive the cell in an antiviral state. The protein is Interferon regulatory factor 9 (IRF9) of Homo sapiens (Human).